The following is a 195-amino-acid chain: Molybdopterin synthase catalytic subunit (195 aa).

The interval 1–37 is disordered; sequence MSARPEPQPGSERNATEPLPSHLDPTTYPRTLTTTHG. Over residues 25-37 the composition is skewed to low complexity; it reads PTTYPRTLTTTHG. Residues 141 to 142, Lys157, and 164 to 166 contribute to the substrate site; these read HR and KRE.

This sequence belongs to the MoaE family. MOCS2B subfamily. Heterotetramer; composed of 2 small (MOCS2A) and 2 large (MOCS2B) subunits.

It is found in the cytoplasm. The catalysed reaction is 2 [molybdopterin-synthase sulfur-carrier protein]-C-terminal-Gly-aminoethanethioate + cyclic pyranopterin phosphate + H2O = molybdopterin + 2 [molybdopterin-synthase sulfur-carrier protein]-C-terminal Gly-Gly + 2 H(+). The protein operates within cofactor biosynthesis; molybdopterin biosynthesis. In terms of biological role, catalytic subunit of the molybdopterin synthase complex, a complex that catalyzes the conversion of precursor Z into molybdopterin. Acts by mediating the incorporation of 2 sulfur atoms from thiocarboxylated MOCS2A into precursor Z to generate a dithiolene group. The protein is Molybdopterin synthase catalytic subunit of Emericella nidulans (strain FGSC A4 / ATCC 38163 / CBS 112.46 / NRRL 194 / M139) (Aspergillus nidulans).